A 54-amino-acid chain; its full sequence is Large ribosomal subunit protein bL33A (54 aa).

It belongs to the bacterial ribosomal protein bL33 family.

This is Large ribosomal subunit protein bL33A from Streptomyces avermitilis (strain ATCC 31267 / DSM 46492 / JCM 5070 / NBRC 14893 / NCIMB 12804 / NRRL 8165 / MA-4680).